Consider the following 273-residue polypeptide: MAIYAIGDIQGCFREFRELVDQCGFDPSSDRLWLVGDLVNRGPASLETLRFVRSLGDAAVSVLGNHDLYLLKIAYAGASGRKRHDTLQQVLEAPDRDELIAWLRTLPLMHLEGGYAMVHAGLLPGWTAEPARALAREVEAVLSGDSCEAFLQHMWGNSPKAWRDDLAGWERLRVIVNAMTRMRFCTPDGRMEFDAKGPPDSAPPNHLPWFAHPNRASSDTTIVCGHWSALGLRMEPNLLALDSGCVWGEKLTAVRLEDRRVFQVHAGKQLGSF.

It belongs to the Ap4A hydrolase family.

It carries out the reaction P(1),P(4)-bis(5'-adenosyl) tetraphosphate + H2O = 2 ADP + 2 H(+). Hydrolyzes diadenosine 5',5'''-P1,P4-tetraphosphate to yield ADP. This chain is Bis(5'-nucleosyl)-tetraphosphatase, symmetrical, found in Aromatoleum aromaticum (strain DSM 19018 / LMG 30748 / EbN1) (Azoarcus sp. (strain EbN1)).